The primary structure comprises 359 residues: UPF0283 membrane protein RHE_CH02332 (359 aa).

Positions Met-1 to Asp-61 are disordered. The next 2 membrane-spanning stretches (helical) occupy residues Phe-77–Thr-97 and Leu-111–Ile-131.

It belongs to the UPF0283 family.

It localises to the cell inner membrane. In Rhizobium etli (strain ATCC 51251 / DSM 11541 / JCM 21823 / NBRC 15573 / CFN 42), this protein is UPF0283 membrane protein RHE_CH02332.